The primary structure comprises 637 residues: Biosynthetic arginine decarboxylase (637 aa).

K101 carries the N6-(pyridoxal phosphate)lysine modification. 286–296 contributes to the substrate binding site; that stretch reads FDVGGGLAVDY.

Belongs to the Orn/Lys/Arg decarboxylase class-II family. SpeA subfamily. Mg(2+) is required as a cofactor. Pyridoxal 5'-phosphate serves as cofactor.

It catalyses the reaction L-arginine + H(+) = agmatine + CO2. Its pathway is amine and polyamine biosynthesis; agmatine biosynthesis; agmatine from L-arginine: step 1/1. Catalyzes the biosynthesis of agmatine from arginine. This Shewanella piezotolerans (strain WP3 / JCM 13877) protein is Biosynthetic arginine decarboxylase.